The chain runs to 656 residues: DNA ligase (656 aa).

NAD(+) contacts are provided by residues 32 to 36 and 81 to 82; these read DAIYD and SL. K112 functions as the N6-AMP-lysine intermediate in the catalytic mechanism. NAD(+) is bound by residues R133, E167, and K306. The Zn(2+) site is built by C400, C403, C416, and C421. The BRCT domain occupies 577-656; it reads KSSSVFNNKT…ELLKRLKELD (80 aa).

Belongs to the NAD-dependent DNA ligase family. LigA subfamily. Mg(2+) is required as a cofactor. Mn(2+) serves as cofactor.

The catalysed reaction is NAD(+) + (deoxyribonucleotide)n-3'-hydroxyl + 5'-phospho-(deoxyribonucleotide)m = (deoxyribonucleotide)n+m + AMP + beta-nicotinamide D-nucleotide.. Its function is as follows. DNA ligase that catalyzes the formation of phosphodiester linkages between 5'-phosphoryl and 3'-hydroxyl groups in double-stranded DNA using NAD as a coenzyme and as the energy source for the reaction. It is essential for DNA replication and repair of damaged DNA. This Helicobacter pylori (strain ATCC 700392 / 26695) (Campylobacter pylori) protein is DNA ligase.